Here is a 216-residue protein sequence, read N- to C-terminus: MGRNKKKKRDGDDRRPRLILNFDEEKRREYLTGFHKRKVERKKAAIEEIKQRLKQEQKKLREERHQEYLKMLAEREEALEEADELERLVTAKTESVQYDHPNHTVTVTTVSDLDLSGARLLGLPLPEQGDQDGSQEEEVSSMEKPTKALPKKSKDPLLSQRISSLTATLHAHSRKKVKRKHPRRAQDSTKKPPSATRTSKTQRRRRMTGKARHNGE.

Residues 33 to 97 (GFHKRKVERK…LVTAKTESVQ (65 aa)) are a coiled coil. Positions 120–216 (LLGLPLPEQG…MTGKARHNGE (97 aa)) are disordered. Acidic residues predominate over residues 129–140 (GDQDGSQEEEVS). Composition is skewed to basic residues over residues 171–183 (AHSRKKVKRKHPR) and 200–216 (KTQRRRRMTGKARHNGE).

The protein belongs to the RRP17 family. As to quaternary structure, interacts with KIAA1191.

The protein resides in the nucleus. It localises to the nucleolus. The protein localises to the cytoplasm. Functionally, multifunctional RNA binding protein that plays a role in RNA metabolism and DNA maintenance. Participates in the resolution of DNA stress and the maintenance of genome integrity by localizing to sites of DNA insults. Also plays a role in proper nucleolar organization by limiting nucleolar size and regulating nucleolar number. Mechanistically, regulates the nucleolar levels of fibrillarin and nucleolin, two key players in pre-rRNA processing and ribosome assembly. This Rattus norvegicus (Rat) protein is Nucleolar protein 12 (Nol12).